Here is a 156-residue protein sequence, read N- to C-terminus: Holliday junction resolvase (156 aa).

Belongs to the RuvC family. Poxviruses-type subfamily. Requires Mg(2+) as cofactor.

Nuclease that specifically cleaves and resolves four-way DNA Holliday junctions into linear duplex products. The sequence is that of Holliday junction resolvase from Vertebrata (FPV).